The chain runs to 226 residues: Glutathione S-transferase-like protein gedE (226 aa).

The region spanning 4 to 85 (LLPIKVWGQG…YLVERYDTAH (82 aa)) is the GST N-terminal domain. Residues 92 to 226 (DTNDAQHARQ…VLSAVMPPPS (135 aa)) form the GST C-terminal domain.

It belongs to the GST superfamily.

It functions in the pathway secondary metabolite biosynthesis. Functionally, glutathione S-transferase-like protein; part of the gene cluster that mediates the biosynthesis of geodin, an intermediate in the biosynthesis of other natural products. The pathway begins with the synthesis of atrochrysone thioester by the polyketide synthase (PKS) gedC. The atrochrysone carboxyl ACP thioesterase gedB then breaks the thioester bond and releases the atrochrysone carboxylic acid from gedC. The atrochrysone carboxylic acid is then converted to atrochrysone which is further transformed into emodinanthrone. The next step is performed by the emodinanthrone oxygenase gedH that catalyzes the oxidation of emodinanthrone to emodin. Emodin O-methyltransferase encoded probably by gedA then catalyzes methylation of the 8-hydroxy group of emodin to form questin. Ring cleavage of questin by questin oxidase gedK leads to desmethylsulochrin via several intermediates including questin epoxide. Another methylation step probably catalyzed by methyltransferase gedG leads to the formation of sulochrin which is further converted to dihydrogeodin by the sulochrin halogenase gedL. Finally, the dihydrogeodin oxidase gedJ catalyzes the stereospecific phenol oxidative coupling reaction converting dihydrogeodin to geodin. The sequence is that of Glutathione S-transferase-like protein gedE from Aspergillus terreus (strain NIH 2624 / FGSC A1156).